A 258-amino-acid chain; its full sequence is Protein UL24 homolog (258 aa).

Belongs to the herpesviridae UL24 family.

The protein localises to the virion. The protein resides in the host cytoplasm. Its subcellular location is the host nucleus. It is found in the host nucleolus. It localises to the host Golgi apparatus. May participate in nuclear egress of viral particles. Plays a role in the dispersal of several host nucleolar proteins including NCL/nucleolin and NPM1. Since deletion of host NCL/nucleolin negatively impact on nuclear egress, UL24 supposedly acts on this process through its effect on host nucleoli. The chain is Protein UL24 homolog from Homo sapiens (Human).